The chain runs to 504 residues: Maturase K (504 aa).

The protein belongs to the intron maturase 2 family. MatK subfamily.

It localises to the plastid. Its subcellular location is the chloroplast. Its function is as follows. Usually encoded in the trnK tRNA gene intron. Probably assists in splicing its own and other chloroplast group II introns. The protein is Maturase K of Fagus crenata (Japanese beech).